The chain runs to 528 residues: T-complex protein 1 subunit delta (528 aa).

It belongs to the TCP-1 chaperonin family. As to quaternary structure, heterooligomeric complex of about 850 to 900 kDa that forms two stacked rings, 12 to 16 nm in diameter.

The protein resides in the cytoplasm. Functionally, molecular chaperone; assists the folding of proteins upon ATP hydrolysis. Known to play a role, in vitro, in the folding of actin and tubulin. In yeast may play a role in mitotic spindle formation. This chain is T-complex protein 1 subunit delta (CCT4), found in Saccharomyces cerevisiae (strain ATCC 204508 / S288c) (Baker's yeast).